A 637-amino-acid polypeptide reads, in one-letter code: MSQQETHGFQTEVKQLLHLMIHSLYSNKEIFLRELVSNAADAADKLRYLALTNDALYEGDGELRVRISADKEKGTVTIEDNGVGMTRDGVIEHLGTIAKSGTAEFFKNLSGEASKDSQLIGQFGVGFYSAFIVAKKVTVRTRAAGHKANEAVLWESEGEGSFTVDTITKASRGTEITLHLRDEEKEFADEWRLRSIITKYSDHISVPVEMWQEGTPERDGPDGEKIPATEGYWKVMNKATALWMRNKSEISDEEYQEFYKHISHDYTDALLWSHNRVEGKQEYTNLLYIPSKAPWDLWNRDRKHGLKLFVQRVFIMDDAEQFMPSYLRFVQGLIDSNDLPLNVSREILQDNHITKAMRTGITKRVLGMLEKLAKDDAEKYQQFWAEFGQVLKEGPAEDFANRERIAGLLRFASTHTGSAAPTVSLDDYLSRMKEGQTKIYYIVADSHEAAANSPHLELLRKKGIEVLLMSERIDEWLINHLTEYKEKQLHSVTRGELELGELEDAAEKEAQEKLAEESAPLVERIKAALGASVADVKVTSRLTDTPACVVTGEGEMSSQMIKLMQAAGQPVPEVKPTFEINPAHPLVSRLNDLQDEAAFADWSNLLLQQAQLSEKGSLADPSAFIKLMNQMLLANLK.

The interval 1–345 is a; substrate-binding; sequence MSQQETHGFQ…SNDLPLNVSR (345 aa). The tract at residues 346 to 562 is b; the sequence is EILQDNHITK…EGEMSSQMIK (217 aa). A c region spans residues 563-637; sequence LMQAAGQPVP…MNQMLLANLK (75 aa).

The protein belongs to the heat shock protein 90 family. In terms of assembly, homodimer.

Its subcellular location is the cytoplasm. In terms of biological role, molecular chaperone. Has ATPase activity. In Shewanella sp. (strain MR-4), this protein is Chaperone protein HtpG.